The chain runs to 92 residues: Secreted RxLR effector protein 21 (92 aa).

An N-terminal signal peptide occupies residues 1–21 (MNLSTLLLTLACISQLHGGSA). Positions 30–33 (RQLR) match the RxLR motif.

Belongs to the RxLR effector family.

It localises to the secreted. It is found in the host nucleus. The protein localises to the host cytoplasm. In terms of biological role, secreted effector that completely suppresses the host cell death induced by cell death-inducing proteins. The polypeptide is Secreted RxLR effector protein 21 (Plasmopara viticola (Downy mildew of grapevine)).